Here is a 65-residue protein sequence, read N- to C-terminus: Alpha-conotoxin Mr1.1 (65 aa).

The first 21 residues, M1–S21, serve as a signal peptide directing secretion. A propeptide spanning residues F22–K48 is cleaved from the precursor. 2 disulfide bridges follow: C50-C56 and C51-C64. A ser-Xaa-Pro motif, crucial for potent interaction with nAChR region spans residues S52–P54. The residue at position 64 (C64) is a Cysteine amide.

This sequence belongs to the conotoxin A superfamily. In terms of tissue distribution, expressed by the venom duct.

Its subcellular location is the secreted. In terms of biological role, alpha-conotoxins act on postsynaptic membranes, they bind to the nicotinic acetylcholine receptors (nAChR) and thus inhibit them. This toxin potently and reversibly inhibits alpha-9-alpha-10/CHRNA9-CHRNA10 (IC(50)=92 nM (human) and IC(50)=8.3 nM (rat)) and human alpha3-beta-2/CHRNA3-CHRNB2 nAChR (IC(50)=218.9 nM). Also moderately inhibits human alpha-3-beta-4/CHRNA3-CHRNB4 (60% inhibition at 1 uM), rat alpha-7/CHRNA7 (65% inhibition at 1 uM) and rat alpha-3-beta-2/CHRNA3-CHRNB2 nAChR (50-70% inhibition at 10 uM). In two rat pain models, this toxin shows analgesic effect. The protein is Alpha-conotoxin Mr1.1 of Conus marmoreus (Marble cone).